Reading from the N-terminus, the 123-residue chain is Defensin beta 118 (123 aa).

Positions 1-19 (MKLLLLALPILVLLPQVIP) are cleaved as a signal peptide. 3 disulfide bridges follow: Cys27–Cys54, Cys34–Cys48, and Cys38–Cys55. Positions 65–123 (LPTTSPTPLSDSTPGIIDNILTIRFTTDYFEISSKKDMVEESEAGQGTQTSPPNVHHTS) are excised as a propeptide. The segment at 100 to 123 (KDMVEESEAGQGTQTSPPNVHHTS) is disordered. The segment covering 109-123 (GQGTQTSPPNVHHTS) has biased composition (polar residues).

It belongs to the beta-defensin family. The three-dimensional structure formed by the three intramolecular disulfide bridges is indispensable for antimicrobial activity. In terms of tissue distribution, high-level and epididymis-specific expression. Most abundant in the epithelium of the caput and is also present in the lumen and bound to sperm.

It is found in the secreted. Its function is as follows. Host defense peptide that exhibits antimicrobial activity against both Gram-negative bacteria, such as E.coli and S.typhimurium, and Gram-positive bacteria, such as S.aureus and B.subtilis. Inhibits cell adhesion of E.coli on intestinal epithelial enterocytes. Causes rapid permeabilization of both the outer and inner membrane of E.coli, leading to morphological alterations on the bacterial surface. Binds to bacterial lipopolysaccharides (LPS) with high affinity, and may thereby be involved in immunoregulation through LPS neutralization. May contribute to epididymal innate immunity and protect the sperm against attack by microorganisms. The protein is Defensin beta 118 (DEFB118) of Macaca mulatta (Rhesus macaque).